A 417-amino-acid chain; its full sequence is Cytochrome b-c1 complex subunit 2, mitochondrial (417 aa).

A mitochondrion-targeting transit peptide spans 1-22 (MTRGVPRLAVAARHFSTAEAAG).

Belongs to the peptidase M16 family. UQCRC2/QCR2 subfamily. As to quaternary structure, component of the ubiquinol-cytochrome c oxidoreductase (cytochrome b-c1 complex, complex III, CIII), a multisubunit enzyme composed of 3 respiratory subunits cytochrome b, cytochrome c1 and Rieske protein, 2 core protein subunits, and additional low-molecular weight protein subunits. The complex exists as an obligatory dimer and forms supercomplexes (SCs) in the inner mitochondrial membrane with cytochrome c oxidase (complex IV, CIV).

Its subcellular location is the mitochondrion inner membrane. In terms of biological role, component of the ubiquinol-cytochrome c oxidoreductase, a multisubunit transmembrane complex that is part of the mitochondrial electron transport chain which drives oxidative phosphorylation. The respiratory chain contains 3 multisubunit complexes succinate dehydrogenase (complex II, CII), ubiquinol-cytochrome c oxidoreductase (cytochrome b-c1 complex, complex III, CIII) and cytochrome c oxidase (complex IV, CIV), that cooperate to transfer electrons derived from NADH and succinate to molecular oxygen, creating an electrochemical gradient over the inner membrane that drives transmembrane transport and the ATP synthase. The cytochrome b-c1 complex catalyzes electron transfer from ubiquinol to cytochrome c, linking this redox reaction to translocation of protons across the mitochondrial inner membrane, with protons being carried across the membrane as hydrogens on the quinol. In the process called Q cycle, 2 protons are consumed from the matrix, 4 protons are released into the intermembrane space and 2 electrons are passed to cytochrome c. This chain is Cytochrome b-c1 complex subunit 2, mitochondrial (QCR2), found in Yarrowia lipolytica (strain CLIB 122 / E 150) (Yeast).